Reading from the N-terminus, the 802-residue chain is Copper-exporting P-type ATPase (802 aa).

HMA domains lie at 5-70 and 72-138; these read KKTT…YGVA and ETVE…YDAS. Residues C16, C19, C83, and C86 each coordinate Cu(+). 6 helical membrane-spanning segments follow: residues 161 to 181, 192 to 212, 224 to 244, 256 to 276, 411 to 431, and 438 to 458; these read LIIS…HLFN, WFQF…FYVG, MDVL…YEMV, LYFE…YLEA, YFVP…ITLV, and PALV…LGLA. The active-site 4-aspartylphosphate intermediate is the D495. Residues D690 and D694 each contribute to the Mg(2+) site. The next 2 membrane-spanning stretches (helical) occupy residues 748–767 and 771–790; these read LFWA…LGLL and VAGA…ALRL.

This sequence belongs to the cation transport ATPase (P-type) (TC 3.A.3) family. Type IB subfamily.

It is found in the cell membrane. It catalyses the reaction Cu(+)(in) + ATP + H2O = Cu(+)(out) + ADP + phosphate + H(+). In terms of biological role, involved in copper export. The chain is Copper-exporting P-type ATPase (copA) from Staphylococcus aureus (strain USA300 / TCH1516).